A 57-amino-acid polypeptide reads, in one-letter code: Dendroaspis polylepis MT9 (57 aa).

4 cysteine pairs are disulfide-bonded: Cys-3-Cys-22, Cys-17-Cys-36, Cys-38-Cys-49, and Cys-50-Cys-55.

It belongs to the three-finger toxin family. Short-chain subfamily. In terms of tissue distribution, expressed by the venom gland.

The protein localises to the secreted. When tested on muscarinic GPCR, specifically antagonizes the type 2 receptor (CHRM2) subtype (Ki/Kd=120-399 nM). Ex vivo, it reverses the M2R-agonist-induced relaxation in rat and human arteries. This is Dendroaspis polylepis MT9 from Dendroaspis polylepis polylepis (Black mamba).